The sequence spans 118 residues: UPF0102 protein Arth_2474 (118 aa).

Belongs to the UPF0102 family.

The chain is UPF0102 protein Arth_2474 from Arthrobacter sp. (strain FB24).